We begin with the raw amino-acid sequence, 250 residues long: Small ribosomal subunit protein uS2 (250 aa).

Belongs to the universal ribosomal protein uS2 family.

In Delftia acidovorans (strain DSM 14801 / SPH-1), this protein is Small ribosomal subunit protein uS2.